The following is a 419-amino-acid chain: Murein hydrolase activator EnvC (419 aa).

Residues 1–34 form the signal peptide; that stretch reads MTRAVKPRRFAIRPIIYASVLSAGVLLCAFSAHA. Coiled-coil stretches lie at residues 35 to 124 and 155 to 271; these read DERD…LDAA and LNQA…ATRK. Residues 252–270 show a composition bias toward basic and acidic residues; sequence EREAREAQAVRDRQKEATR. Positions 252-290 are disordered; sequence EREAREAQAVRDRQKEATRKGTTYKPTESEKSLMSRTGG.

The protein belongs to the peptidase M23B family.

It is found in the periplasm. In terms of biological role, activator of the cell wall hydrolases AmiA and AmiB. Required for septal murein cleavage and daughter cell separation during cell division. In vitro, exhibits weak endoproteolytic activity on beta-casein. This chain is Murein hydrolase activator EnvC (envC), found in Escherichia coli (strain K12).